A 159-amino-acid polypeptide reads, in one-letter code: SsrA-binding protein (159 aa).

This sequence belongs to the SmpB family.

It localises to the cytoplasm. Required for rescue of stalled ribosomes mediated by trans-translation. Binds to transfer-messenger RNA (tmRNA), required for stable association of tmRNA with ribosomes. tmRNA and SmpB together mimic tRNA shape, replacing the anticodon stem-loop with SmpB. tmRNA is encoded by the ssrA gene; the 2 termini fold to resemble tRNA(Ala) and it encodes a 'tag peptide', a short internal open reading frame. During trans-translation Ala-aminoacylated tmRNA acts like a tRNA, entering the A-site of stalled ribosomes, displacing the stalled mRNA. The ribosome then switches to translate the ORF on the tmRNA; the nascent peptide is terminated with the 'tag peptide' encoded by the tmRNA and targeted for degradation. The ribosome is freed to recommence translation, which seems to be the essential function of trans-translation. The polypeptide is SsrA-binding protein (Frankia casuarinae (strain DSM 45818 / CECT 9043 / HFP020203 / CcI3)).